Reading from the N-terminus, the 379-residue chain is Junctional adhesion molecule-like (379 aa).

Positions methionine 1–proline 20 are cleaved as a signal peptide. Topologically, residues glutamine 21–leucine 281 are extracellular. 2 consecutive Ig-like V-type domains span residues proline 24–glutamate 135 and proline 140–valine 250. Cysteine 45 and cysteine 119 form a disulfide bridge. 3 N-linked (GlcNAc...) asparagine glycosylation sites follow: asparagine 79, asparagine 89, and asparagine 125. Residues cysteine 158 and cysteine 236 are joined by a disulfide bond. The helical transmembrane segment at valine 282–valine 302 threads the bilayer. Residues lysine 303–lysine 379 lie on the Cytoplasmic side of the membrane. Phosphotyrosine is present on tyrosine 355.

This sequence belongs to the immunoglobulin superfamily. In terms of assembly, homodimer; active form in leukocyte-endothelial cell adhesion. Interacts (homodimeric form) with CXADR. Interacts (via cytoplasmic domain) with the PI3 kinase; upon CXADR-binding. Interacts with ITGA4 and ITGB1; integrin alpha-4/beta-1 may regulate leukocyte to endothelial cells adhesion by controlling JAML homodimerization. Expressed by gamma-delta intraepithelial T cells (at protein level).

The protein localises to the cell membrane. It localises to the cell junction. In terms of biological role, transmembrane protein of the plasma membrane of leukocytes that control their migration and activation through interaction with CXADR, a plasma membrane receptor found on adjacent epithelial and endothelial cells. The interaction between both receptors mediates the activation of gamma-delta T-cells, a subpopulation of T-cells residing in epithelia and involved in tissue homeostasis and repair. Upon epithelial CXADR-binding, JAML induces downstream cell signaling events in gamma-delta T-cells through PI3-kinase and MAP kinases. It results in proliferation and production of cytokines and growth factors by T-cells that in turn stimulate epithelial tissues repair. It also controls the transmigration of leukocytes within epithelial and endothelial tissues through adhesive interactions with epithelial and endothelial CXADR. This Mus musculus (Mouse) protein is Junctional adhesion molecule-like.